The sequence spans 541 residues: Chaperonin GroEL 1 (541 aa).

ATP-binding positions include 29 to 32, 86 to 90, G415, 479 to 481, and D495; these read TIGP, DGTTT, and NAA.

It belongs to the chaperonin (HSP60) family. In terms of assembly, forms a cylinder of 14 subunits composed of two heptameric rings stacked back-to-back. Interacts with the co-chaperonin GroES.

The protein localises to the cytoplasm. The catalysed reaction is ATP + H2O + a folded polypeptide = ADP + phosphate + an unfolded polypeptide.. Together with its co-chaperonin GroES, plays an essential role in assisting protein folding. The GroEL-GroES system forms a nano-cage that allows encapsulation of the non-native substrate proteins and provides a physical environment optimized to promote and accelerate protein folding. The protein is Chaperonin GroEL 1 of Streptomyces coelicolor (strain ATCC BAA-471 / A3(2) / M145).